Here is a 499-residue protein sequence, read N- to C-terminus: Cysteine--tRNA ligase (499 aa).

Cys-29 is a binding site for Zn(2+). The 'HIGH' region motif lies at 31–41; the sequence is VTVYDLCHLGH. Residues Cys-213, His-238, and Glu-242 each contribute to the Zn(2+) site. A 'KMSKS' region motif is present at residues 270–274; it reads KMSKS. Lys-273 provides a ligand contact to ATP.

It belongs to the class-I aminoacyl-tRNA synthetase family. Monomer. The cofactor is Zn(2+).

The protein resides in the cytoplasm. It catalyses the reaction tRNA(Cys) + L-cysteine + ATP = L-cysteinyl-tRNA(Cys) + AMP + diphosphate. This Synechococcus sp. (strain CC9902) protein is Cysteine--tRNA ligase.